Here is a 96-residue protein sequence, read N- to C-terminus: Large ribosomal subunit protein bL28 (96 aa).

The segment at 1 to 24 is disordered; the sequence is MSRSCELTGKGVQSGHNVSHANNK.

The protein belongs to the bacterial ribosomal protein bL28 family.

The protein is Large ribosomal subunit protein bL28 of Sinorhizobium fredii (strain NBRC 101917 / NGR234).